A 626-amino-acid polypeptide reads, in one-letter code: Miltiradiene synthase KSL1, chloroplastic (626 aa).

A chloroplast-targeting transit peptide spans 1–51 (MSLAFNLRVIPFSGHTIQSRRGLFPVHESPMITTKPFAAVKCSLTTSTDLM). Positions 329, 333, 473, and 481 each coordinate Mg(2+). Positions 329–333 (DDFFD) match the DDXXD motif motif.

It belongs to the terpene synthase family. It depends on Mg(2+) as a cofactor. Highly expressed in roots, and, at low levels, in stems and leaves.

The protein resides in the plastid. It is found in the chloroplast. The catalysed reaction is (+)-copalyl diphosphate = miltiradiene + diphosphate. It functions in the pathway secondary metabolite biosynthesis; terpenoid biosynthesis. In terms of biological role, involved in the biosynthesis of ent-kaurene diterpenoids natural products such as oridonin, miltiradiene, eriocalyxin B and nezukol, known to exhibit antitumor, anti-inflammatory and antibacterial activities. Catalyzes the conversion of (+)-copalyl diphosphate ((+)-CPP) to miltiradiene. The protein is Miltiradiene synthase KSL1, chloroplastic of Isodon rubescens (Rabdosia rubescens).